Consider the following 257-residue polypeptide: 7-carboxy-7-deazaguanine synthase (257 aa).

Residues 29–31 and Arg-44 contribute to the substrate site; that span reads LQG. A Radical SAM core domain is found at 35 to 253; that stretch reads LAGTPSVFVR…PRLHVALWND (219 aa). Residues Cys-48, Cys-52, and Cys-55 each contribute to the [4Fe-4S] cluster site. Ser-57 provides a ligand contact to Mg(2+). Substrate is bound at residue Thr-90. Gly-92 provides a ligand contact to S-adenosyl-L-methionine. The segment at 133-153 is disordered; it reads VSPKLASSTPTAETDPKGDGE.

The protein belongs to the radical SAM superfamily. 7-carboxy-7-deazaguanine synthase family. Homodimer. [4Fe-4S] cluster serves as cofactor. S-adenosyl-L-methionine is required as a cofactor. It depends on Mg(2+) as a cofactor.

The catalysed reaction is 6-carboxy-5,6,7,8-tetrahydropterin + H(+) = 7-carboxy-7-deazaguanine + NH4(+). Its pathway is purine metabolism; 7-cyano-7-deazaguanine biosynthesis. Its function is as follows. Catalyzes the complex heterocyclic radical-mediated conversion of 6-carboxy-5,6,7,8-tetrahydropterin (CPH4) to 7-carboxy-7-deazaguanine (CDG), a step common to the biosynthetic pathways of all 7-deazapurine-containing compounds. This chain is 7-carboxy-7-deazaguanine synthase, found in Halobacterium salinarum (strain ATCC 29341 / DSM 671 / R1).